Here is a 218-residue protein sequence, read N- to C-terminus: Ribosomal RNA small subunit methyltransferase J (218 aa).

S-adenosyl-L-methionine is bound by residues 55–56, 71–72, and Asp123; these read RD and ER.

This sequence belongs to the methyltransferase superfamily. RsmJ family.

The protein localises to the cytoplasm. The enzyme catalyses guanosine(1516) in 16S rRNA + S-adenosyl-L-methionine = N(2)-methylguanosine(1516) in 16S rRNA + S-adenosyl-L-homocysteine + H(+). Specifically methylates the guanosine in position 1516 of 16S rRNA. In Rhodopseudomonas palustris (strain HaA2), this protein is Ribosomal RNA small subunit methyltransferase J.